Here is a 69-residue protein sequence, read N- to C-terminus: Pancreatic secretory trypsin inhibitor (69 aa).

The Kazal-like domain occupies Thr-8–Glu-65. 3 cysteine pairs are disulfide-bonded: Cys-14/Cys-45, Cys-23/Cys-42, and Cys-31/Cys-63.

The protein localises to the secreted. In terms of biological role, this is a trypsin inhibitor, its physiological function is to prevent the trypsin-catalyzed premature activation of zymogens within the pancreas. This Struthio camelus (Common ostrich) protein is Pancreatic secretory trypsin inhibitor (SPINK1).